Reading from the N-terminus, the 449-residue chain is 23S rRNA (uracil(1939)-C(5))-methyltransferase RlmD (449 aa).

The TRAM domain maps to 1 to 66 (MGRSRHHNKL…AKFDEAKVVE (66 aa)). Residues cysteine 79, cysteine 85, cysteine 88, and cysteine 169 each coordinate [4Fe-4S] cluster. Positions 280, 309, 314, 330, 357, and 379 each coordinate S-adenosyl-L-methionine. Cysteine 405 functions as the Nucleophile in the catalytic mechanism.

This sequence belongs to the class I-like SAM-binding methyltransferase superfamily. RNA M5U methyltransferase family. RlmD subfamily.

It catalyses the reaction uridine(1939) in 23S rRNA + S-adenosyl-L-methionine = 5-methyluridine(1939) in 23S rRNA + S-adenosyl-L-homocysteine + H(+). Its function is as follows. Catalyzes the formation of 5-methyl-uridine at position 1939 (m5U1939) in 23S rRNA. This Francisella tularensis subsp. tularensis (strain FSC 198) protein is 23S rRNA (uracil(1939)-C(5))-methyltransferase RlmD.